A 144-amino-acid polypeptide reads, in one-letter code: Deoxyuridine 5'-triphosphate nucleotidohydrolase (144 aa).

DUMP is bound by residues Ser66, Gly79, Asp82, Tyr85, Lys90, Arg134, Phe139, and Gly140.

It belongs to the dUTPase family. Homotrimer. Mg(2+) serves as cofactor.

It carries out the reaction dUTP + H2O = dUMP + diphosphate + H(+). It participates in pyrimidine metabolism; dUMP biosynthesis; dUMP from dCTP (dUTP route): step 2/2. Its function is as follows. Involved in nucleotide metabolism via production of dUMP, the immediate precursor of thymidine nucleotides, and decreases the intracellular concentration of dUTP so that uracil cannot be incorporated into DNA. The polypeptide is Deoxyuridine 5'-triphosphate nucleotidohydrolase (DUT1) (Candida glabrata (strain ATCC 2001 / BCRC 20586 / JCM 3761 / NBRC 0622 / NRRL Y-65 / CBS 138) (Yeast)).